We begin with the raw amino-acid sequence, 345 residues long: MDQTSLILAIESSCDETSVAVIKNGDIILSNIIATQINSHQRFGGVVPEVASRHHIEQITICIEQALKQAEVRKEDLDAVAVTYGPGLVGALLVGVSAAKAFAFANELPLIPVNHMIGHIYAARFVKPIVFPALALLVSGGHTELVYMPTENEFKIIGETRDDAAGEAYDKVGRVMGLKYPAGKAIDELAHQGEDIFKFPRAMEHEDNFDFSFSGLKSAFINTVHHADQINEELSKKDLAASFQQSVIDVITAKTVRACEQLEIKQLILAGGVAANRGLRDTLDKELGEKFNHLDFVKAPLDLCGDNGAMIGAAGEMLMRHQVFADMTLNADPSLEFDWEPEAIK.

His115 and His119 together coordinate Fe cation. Residues Leu137 to Gly141, Asp170, Gly183, Asp187, and Asn276 contribute to the substrate site. Fe cation is bound at residue Asp306.

Belongs to the KAE1 / TsaD family. It depends on Fe(2+) as a cofactor.

It is found in the cytoplasm. It carries out the reaction L-threonylcarbamoyladenylate + adenosine(37) in tRNA = N(6)-L-threonylcarbamoyladenosine(37) in tRNA + AMP + H(+). Required for the formation of a threonylcarbamoyl group on adenosine at position 37 (t(6)A37) in tRNAs that read codons beginning with adenine. Is involved in the transfer of the threonylcarbamoyl moiety of threonylcarbamoyl-AMP (TC-AMP) to the N6 group of A37, together with TsaE and TsaB. TsaD likely plays a direct catalytic role in this reaction. The chain is tRNA N6-adenosine threonylcarbamoyltransferase from Pediococcus pentosaceus (strain ATCC 25745 / CCUG 21536 / LMG 10740 / 183-1w).